We begin with the raw amino-acid sequence, 239 residues long: Protein GrpE (239 aa).

2 disordered regions span residues 1–53 and 210–239; these read MIEE…EDLK and GPGQQISQESEEKDKVDKDIDSEGSISEEN. 2 stretches are compositionally biased toward basic and acidic residues: residues 34 to 53 and 219 to 230; these read NEDKKLPDDNNEKIDAEDLK and SEEKDKVDKDID.

Belongs to the GrpE family. Homodimer.

The protein resides in the cytoplasm. Participates actively in the response to hyperosmotic and heat shock by preventing the aggregation of stress-denatured proteins, in association with DnaK and GrpE. It is the nucleotide exchange factor for DnaK and may function as a thermosensor. Unfolded proteins bind initially to DnaJ; upon interaction with the DnaJ-bound protein, DnaK hydrolyzes its bound ATP, resulting in the formation of a stable complex. GrpE releases ADP from DnaK; ATP binding to DnaK triggers the release of the substrate protein, thus completing the reaction cycle. Several rounds of ATP-dependent interactions between DnaJ, DnaK and GrpE are required for fully efficient folding. The sequence is that of Protein GrpE from Prochlorococcus marinus (strain MIT 9515).